Consider the following 408-residue polypeptide: Glyceraldehyde-3-phosphate dehydrogenase, testis-specific (408 aa).

The segment at 1–73 (MSKRDIVLTN…TPPPKMVSVA (73 aa)) is testis-specific N-terminal extension. The tract at residues 19-68 (QPCPVTRAPPPPEPKAEVEPQPQPEPTPVREEIKPPPPPLPPHPATPPPK) is disordered. Positions 53 to 68 (PPPPPLPPHPATPPPK) are enriched in pro residues. Residues 85–86 (RI), Asp-106, Lys-151, Tyr-173, and Ser-193 each bind NAD(+). Residues 223–225 (SCT), Thr-254, 283–284 (TG), and Arg-306 contribute to the D-glyceraldehyde 3-phosphate site. The active-site Nucleophile is the Cys-224. Asn-388 serves as a coordination point for NAD(+).

Belongs to the glyceraldehyde-3-phosphate dehydrogenase family. As to quaternary structure, homotetramer. Interacts with ARRB2; the interaction is detected in the nucleus upon OR1D2 stimulation. As to expression, testis specific.

The protein localises to the cytoplasm. It catalyses the reaction D-glyceraldehyde 3-phosphate + phosphate + NAD(+) = (2R)-3-phospho-glyceroyl phosphate + NADH + H(+). It functions in the pathway carbohydrate degradation; glycolysis; pyruvate from D-glyceraldehyde 3-phosphate: step 1/5. In terms of biological role, may play an important role in regulating the switch between different pathways for energy production during spermiogenesis and in the spermatozoon. Required for sperm motility and male fertility. The protein is Glyceraldehyde-3-phosphate dehydrogenase, testis-specific (GAPDHS) of Homo sapiens (Human).